Here is a 238-residue protein sequence, read N- to C-terminus: Probable transcriptional regulatory protein SERP0322 (238 aa).

The protein belongs to the TACO1 family. YeeN subfamily.

It localises to the cytoplasm. This Staphylococcus epidermidis (strain ATCC 35984 / DSM 28319 / BCRC 17069 / CCUG 31568 / BM 3577 / RP62A) protein is Probable transcriptional regulatory protein SERP0322.